The sequence spans 713 residues: Forkhead box protein P2 (713 aa).

Polar residues predominate over residues 1–28 (MMQESATETISNSSMNQNGMSTLSSQLD). Disordered regions lie at residues 1-44 (MMQE…SSEV) and 283-337 (KHGG…TGAS). Low complexity predominate over residues 290-303 (TTNNSSSTTSSTTS). Polar residues predominate over residues 313-322 (SIVNGQSSVL). Residues 324–335 (ARRDSSSHEETG) are compositionally biased toward basic and acidic residues. Residues 344 to 369 (GVCKWPGCESICEDFGQFLKHLNNEH) form a C2H2-type zinc finger. Residues 386–407 (VQQLEIQLSKERERLQAMMTHL) are leucine-zipper. The segment at 420 to 424 (PLNLV) is CTBP1-binding. Positions 436–457 (TSPQSLPQTPTTPTAPVTPITQ) are enriched in low complexity. The segment at 436–463 (TSPQSLPQTPTTPTAPVTPITQGPSVIT) is disordered. Positions 502-592 (RPPFTYATLI…SQKITGSPTL (91 aa)) form a DNA-binding region, fork-head. 2 disordered regions span residues 647–666 (LDHIDSNGNSSPGCSPQPHI) and 676–713 (VIAEDEDCPMSLVTTANHSPELEDDREIEEEPLSEDLE). Positions 697-713 (LEDDREIEEEPLSEDLE) are enriched in acidic residues.

In terms of assembly, forms homodimers and heterodimers with FOXP1 and FOXP4. Dimerization is required for DNA-binding. Interacts with CTBP1. Interacts with FOXP1. Interacts with TBR1. Interacts with ZMYM2.

It localises to the nucleus. Functionally, transcriptional repressor that may play a role in the specification and differentiation of lung epithelium. May also play a role in developing neural, gastrointestinal and cardiovascular tissues. Can act with CTBP1 to synergistically repress transcription but CTPBP1 is not essential. Plays a role in synapse formation by regulating SRPX2 levels. In Gorilla gorilla gorilla (Western lowland gorilla), this protein is Forkhead box protein P2 (FOXP2).